The primary structure comprises 456 residues: Bifunctional protein GlmU (456 aa).

The tract at residues methionine 1–arginine 229 is pyrophosphorylase. UDP-N-acetyl-alpha-D-glucosamine is bound by residues leucine 11–glycine 14, lysine 25, glutamine 76, glycine 81–threonine 82, tyrosine 103–aspartate 105, glycine 140, glutamate 154, asparagine 169, and asparagine 227. Residue aspartate 105 coordinates Mg(2+). Asparagine 227 lines the Mg(2+) pocket. The tract at residues leucine 230–alanine 250 is linker. The segment at glycine 251–lysine 456 is N-acetyltransferase. 2 residues coordinate UDP-N-acetyl-alpha-D-glucosamine: arginine 333 and lysine 351. The Proton acceptor role is filled by histidine 363. UDP-N-acetyl-alpha-D-glucosamine-binding residues include tyrosine 366 and asparagine 377. Residues alanine 380, asparagine 386–tyrosine 387, serine 405, alanine 423, and arginine 440 contribute to the acetyl-CoA site.

This sequence in the N-terminal section; belongs to the N-acetylglucosamine-1-phosphate uridyltransferase family. The protein in the C-terminal section; belongs to the transferase hexapeptide repeat family. Homotrimer. It depends on Mg(2+) as a cofactor.

It is found in the cytoplasm. The catalysed reaction is alpha-D-glucosamine 1-phosphate + acetyl-CoA = N-acetyl-alpha-D-glucosamine 1-phosphate + CoA + H(+). It carries out the reaction N-acetyl-alpha-D-glucosamine 1-phosphate + UTP + H(+) = UDP-N-acetyl-alpha-D-glucosamine + diphosphate. It participates in nucleotide-sugar biosynthesis; UDP-N-acetyl-alpha-D-glucosamine biosynthesis; N-acetyl-alpha-D-glucosamine 1-phosphate from alpha-D-glucosamine 6-phosphate (route II): step 2/2. The protein operates within nucleotide-sugar biosynthesis; UDP-N-acetyl-alpha-D-glucosamine biosynthesis; UDP-N-acetyl-alpha-D-glucosamine from N-acetyl-alpha-D-glucosamine 1-phosphate: step 1/1. It functions in the pathway bacterial outer membrane biogenesis; LPS lipid A biosynthesis. Its function is as follows. Catalyzes the last two sequential reactions in the de novo biosynthetic pathway for UDP-N-acetylglucosamine (UDP-GlcNAc). The C-terminal domain catalyzes the transfer of acetyl group from acetyl coenzyme A to glucosamine-1-phosphate (GlcN-1-P) to produce N-acetylglucosamine-1-phosphate (GlcNAc-1-P), which is converted into UDP-GlcNAc by the transfer of uridine 5-monophosphate (from uridine 5-triphosphate), a reaction catalyzed by the N-terminal domain. In Serratia proteamaculans (strain 568), this protein is Bifunctional protein GlmU.